A 156-amino-acid chain; its full sequence is 6,7-dimethyl-8-ribityllumazine synthase (156 aa).

Residues Trp22, Ala56–Glu58, and Ala80–Ile82 contribute to the 5-amino-6-(D-ribitylamino)uracil site. Asp85–Thr86 contacts (2S)-2-hydroxy-3-oxobutyl phosphate. His88 acts as the Proton donor in catalysis. Phe113 is a 5-amino-6-(D-ribitylamino)uracil binding site. Residue Arg127 participates in (2S)-2-hydroxy-3-oxobutyl phosphate binding.

Belongs to the DMRL synthase family.

The catalysed reaction is (2S)-2-hydroxy-3-oxobutyl phosphate + 5-amino-6-(D-ribitylamino)uracil = 6,7-dimethyl-8-(1-D-ribityl)lumazine + phosphate + 2 H2O + H(+). It participates in cofactor biosynthesis; riboflavin biosynthesis; riboflavin from 2-hydroxy-3-oxobutyl phosphate and 5-amino-6-(D-ribitylamino)uracil: step 1/2. Its function is as follows. Catalyzes the formation of 6,7-dimethyl-8-ribityllumazine by condensation of 5-amino-6-(D-ribitylamino)uracil with 3,4-dihydroxy-2-butanone 4-phosphate. This is the penultimate step in the biosynthesis of riboflavin. The protein is 6,7-dimethyl-8-ribityllumazine synthase of Deinococcus deserti (strain DSM 17065 / CIP 109153 / LMG 22923 / VCD115).